Consider the following 143-residue polypeptide: Small ribosomal subunit protein uS12 (143 aa).

Residues 1–19 are compositionally biased toward basic residues; the sequence is MGKPRGIRTARKHVNHRRE. The disordered stretch occupies residues 1 to 21; the sequence is MGKPRGIRTARKHVNHRREQR. At Pro-62 the chain carries Hydroxyproline.

Belongs to the universal ribosomal protein uS12 family. As to quaternary structure, component of the 40S small ribosomal subunit.

It localises to the cytoplasm. Its subcellular location is the cytosol. The protein resides in the rough endoplasmic reticulum. The polypeptide is Small ribosomal subunit protein uS12 (RpS23) (Papilio dardanus (African swallowtail butterfly)).